The sequence spans 148 residues: Fibroblast growth factor 1 (148 aa).

Positions 1-11 are excised as a propeptide; sequence EITTFAALTER. Asn29 is a binding site for heparin. Positions 123–139 are heparin-binding; that stretch reads KKNGKTKLGSRTHFGQK.

The protein belongs to the heparin-binding growth factors family.

The protein resides in the secreted. It is found in the cytoplasm. The protein localises to the cell cortex. Its subcellular location is the cytosol. It localises to the nucleus. Functionally, plays an important role in the regulation of cell survival, cell division, angiogenesis, cell differentiation and cell migration. Functions as a potent mitogen in vitro. Acts as a ligand for FGFR1 and integrins. Binds to FGFR1 in the presence of heparin leading to FGFR1 dimerization and activation via sequential autophosphorylation on tyrosine residues which act as docking sites for interacting proteins, leading to the activation of several signaling cascades. Binds to integrins. Its binding to integrins and subsequent ternary complex formation with integrins and FGFR1 are essential for FGF1 signaling. The polypeptide is Fibroblast growth factor 1 (fgf1) (Cynops pyrrhogaster (Japanese fire-bellied newt)).